Reading from the N-terminus, the 1028-residue chain is RNA cytidine acetyltransferase 1 (1028 aa).

Residues 286–295 and Arg-460 each bind ATP; that span reads GRGKSAALGL. Residues 548 to 731 form the N-acetyltransferase domain; the sequence is VLLGPVDESK…FAPFYISQIP (184 aa). Acetyl-CoA-binding positions include 619–621, 626–632, and Lys-719; these read IAV and MKMGYGS. A disordered region spans residues 989–1028; the sequence is ISIESTKTDNKKEKPSGFDKSAKKRGNDKHSSTSNKKRRA. Positions 994 to 1009 are enriched in basic and acidic residues; the sequence is TKTDNKKEKPSGFDKS.

It belongs to the RNA cytidine acetyltransferase family. NAT10 subfamily.

Its subcellular location is the nucleus. The protein localises to the nucleolus. It carries out the reaction a cytidine in 18S rRNA + acetyl-CoA + ATP + H2O = an N(4)-acetylcytidine in 18S rRNA + ADP + phosphate + CoA + H(+). The enzyme catalyses a cytidine in tRNA + acetyl-CoA + ATP + H2O = an N(4)-acetylcytidine in tRNA + ADP + phosphate + CoA + H(+). Its function is as follows. RNA cytidine acetyltransferase with specificity toward both 18S rRNA and tRNAs. Catalyzes the formation of N(4)-acetylcytidine (ac4C) in 18S rRNA. Required for early nucleolar cleavages of precursor rRNA at sites A0, A1 and A2 during 18S rRNA synthesis. Catalyzes the formation of ac4C in serine and leucine tRNAs. Requires a tRNA-binding adapter protein for full tRNA acetyltransferase activity but not for 18S rRNA acetylation. The chain is RNA cytidine acetyltransferase 1 from Arabidopsis thaliana (Mouse-ear cress).